We begin with the raw amino-acid sequence, 700 residues long: MEERTFEMELAGRKLLVQIGKVAQQANGAAWVKYGDTVVLVTACASKEPREGIDFFPLTVEYEERLYSVGKIPGGFIKREGKPSEKAILSARLIDRPIRPLFPHGYRNDVQVIATVLSVDPDVQPEIVAMIGSSVALSISDIPFDGPTGAVAVGLVDGQFIINPNHEQREKSLMHLVVSGTKDAIVMVEAGAKEVPEETMLDAIMYAHEYIKQIVEFIEGIVKEVGVPKSEVILHEIDKELEEKVRAYATEKIYNALRTAEKKERNDNLDKVEQEVLEHFKEEYPDNLADIDEVLYNIMKEQMRKMITEERIRVDGRGLDDIRPIWCEVGVLPRTHGSAIFTRGQTQVLTVATLGALGDIQILDGIGDEEAKRYMHHYNFPPYSVGEVRPLRGPGRREIGHGALAERALEPVIPSEEEFPYTIRLVSEVLSSNGSTSQASVCGSTLALMDAGVPIKAPVAGVAMGLIKEGDVVSVLTDIQGIEDFLGDMDFKVAGTEKGITAIQMDIKIPGIDKEILKMALEKARRGRLYILSKMLEVIKEPRKQLSVYAPRVIRMVVDPEKIREIIGPGGKTISKIIAETGVKIDIEEDGRLYITASDLRSGERAKQMIEAITKDIAVGEIYLGKVLRITPFGAFVEIAPGKEGLVHISKLSKKRVQKVEDVVKVGDDILVKVTDIDKLGRISLSRKDALPDEEEEERN.

2 residues coordinate Mg(2+): D484 and D490. The KH domain occupies 551–610; sequence PRVIRMVVDPEKIREIIGPGGKTISKIIAETGVKIDIEEDGRLYITASDLRSGERAKQMI. Residues 620 to 688 form the S1 motif domain; the sequence is GEIYLGKVLR…KLGRISLSRK (69 aa).

Belongs to the polyribonucleotide nucleotidyltransferase family. Mg(2+) is required as a cofactor.

Its subcellular location is the cytoplasm. It carries out the reaction RNA(n+1) + phosphate = RNA(n) + a ribonucleoside 5'-diphosphate. Involved in mRNA degradation. Catalyzes the phosphorolysis of single-stranded polyribonucleotides processively in the 3'- to 5'-direction. The chain is Polyribonucleotide nucleotidyltransferase from Thermoanaerobacter sp. (strain X514).